A 589-amino-acid chain; its full sequence is Inactive poly [ADP-ribose] polymerase RCD1 (589 aa).

The 90-residue stretch at 64–153 folds into the WWE domain; it reads KLSAYENRSG…ETGAKTPLAW (90 aa). Positions 248 to 469 constitute a PARP catalytic domain; sequence EAAVSKWDET…LIAKRDNSGV (222 aa). Disordered stretches follow at residues 464-504 and 569-589; these read RDNS…TRPK and QPKS…AGGL. Positions 481-503 are enriched in polar residues; that stretch reads LESNQGARGSGSANSVGSSTTRP. Positions 501-572 constitute an RST domain; the sequence is TRPKSPWMPF…ITTLQNQPKS (72 aa). The span at 571-589 shows a compositional bias: basic and acidic residues; sequence KSKEIPGSIRDHEEGAGGL.

In terms of assembly, interacts with the transcription factors NAC013/NTL1 and NAC046. Interacts with dehydration-responsive DREB2 proteins and a number of transcription factors belonging to several protein families. Interacts with turnip crinkle virus (TCV) movement protein P8. In terms of tissue distribution, expressed in young developing tissues, such as young leaves and flowers and root tips. In mature plants, expressed in vasculature of leaves and roots, and guard cells.

Its subcellular location is the nucleus matrix. Its function is as follows. Inactive ADP-ribosyltransferase that functions with SRO1 to regulate oxidative stress, hormonal and developmental responses. Required for embryogenesis, vegetative and reproductive development, and abiotic stress responses. May regulate several stress-responsive genes. Seems to play a larger developmental role than SRO1. Does not bind NAD in vitro. The chain is Inactive poly [ADP-ribose] polymerase RCD1 (RCD1) from Arabidopsis thaliana (Mouse-ear cress).